The sequence spans 239 residues: Purine nucleoside phosphorylase DeoD-type (239 aa).

Residue His5 coordinates a purine D-ribonucleoside. Phosphate-binding positions include Gly21, Arg25, Arg44, and Arg88 to Ser91. A purine D-ribonucleoside is bound by residues Glu180–Glu182 and Ser204–Asp205. The active-site Proton donor is Asp205.

Belongs to the PNP/UDP phosphorylase family. In terms of assembly, homohexamer; trimer of homodimers.

It carries out the reaction a purine D-ribonucleoside + phosphate = a purine nucleobase + alpha-D-ribose 1-phosphate. The catalysed reaction is a purine 2'-deoxy-D-ribonucleoside + phosphate = a purine nucleobase + 2-deoxy-alpha-D-ribose 1-phosphate. Catalyzes the reversible phosphorolytic breakdown of the N-glycosidic bond in the beta-(deoxy)ribonucleoside molecules, with the formation of the corresponding free purine bases and pentose-1-phosphate. In Yersinia pestis bv. Antiqua (strain Antiqua), this protein is Purine nucleoside phosphorylase DeoD-type.